We begin with the raw amino-acid sequence, 807 residues long: cAMP-regulated phosphoprotein 21 (807 aa).

A disordered region spans residues 1–127 (MSEQGGLTPT…KNREKLSERP (127 aa)). Serine 2 is modified (N-acetylserine). A Phosphoserine modification is found at serine 32. Positions 32–57 (SLDEEEKLELQRRLAAQNQERRKSKS) form a coiled coil. Serine 55 is modified (phosphoserine; by PKA). Positions 89–98 (IHLQLSSFPS) are enriched in polar residues. A compositionally biased stretch (basic and acidic residues) spans 101–127 (EEDKSRKDDSEREKEKDKNREKLSERP). Serine 133 carries the phosphoserine modification. The 64-residue stretch at 163-226 (RMILLKMEQE…SVIINKTSST (64 aa)) folds into the R3H domain. Positions 227–298 (RIPEQRFCEH…VRERIFAHDS (72 aa)) constitute an SUZ domain. The tract at residues 245–282 (SQKRFILKRDNSSIDKEDNQNRMHPFRDDRRSKSIEER) is disordered. Phosphoserine is present on residues asparagine 265 and serine 298. 4 disordered regions span residues 328 to 434 (LFRA…TSSV), 474 to 536 (GSIL…QPQM), 552 to 576 (SQLS…YPAS), and 595 to 627 (QLST…QQPP). Positions 337 to 348 (GRTSGSRQSSSE) are enriched in low complexity. Residues 349–358 (TELRWPDHQR) are compositionally biased toward basic and acidic residues. Positions 359–380 (AWSSTDSDSSNRNLKPTMTKTA) are enriched in polar residues. Phosphoserine is present on residues serine 361 and serine 381. Residues 401-421 (GKLSKTGSESSSSAGSSGSLS) are compositionally biased toward low complexity. Over residues 422 to 434 (RTHPQSTALTSSV) the composition is skewed to polar residues. Over residues 514–524 (QQPPQQQPSPQ) the composition is skewed to pro residues. Over residues 525–535 (PQQQVQASQPQ) the composition is skewed to low complexity. Polar residues-rich tracts occupy residues 552 to 563 (SQLSMSRQSSGD) and 595 to 613 (QLST…QQVL). Residue serine 557 is modified to Phosphoserine. Arginine 650 is modified (asymmetric dimethylarginine).

In terms of assembly, interacts with CALM1. Post-translationally, phosphorylation of isoform 2 at Ser-55 is enhanced upon dopamine D1 receptor activation and favors interaction with CALM1. Methylated by CARM1 at Arg-650 in immature thymocytes. Present at high levels in thymus and low levels in brain. In thymus, isoform 1 is specifically found in immature thymocytes (at protein level).

It localises to the cytoplasm. Its function is as follows. May act as a competitive inhibitor of calmodulin-dependent enzymes such as calcineurin in neurons. In Mus musculus (Mouse), this protein is cAMP-regulated phosphoprotein 21 (Arpp21).